Here is a 162-residue protein sequence, read N- to C-terminus: Caveolin-2 (162 aa).

Topologically, residues 1–86 (MGLETEKADV…FEISKYVIYK (86 aa)) are cytoplasmic. Residue Tyr-19 is modified to Phosphotyrosine; by SRC. Ser-20 and Ser-23 each carry phosphoserine. Tyr-27 carries the post-translational modification Phosphotyrosine; by SRC. Phosphoserine is present on Ser-36. An intramembrane region (helical) is located at residues 87–107 (FLTVFLAIPLAFTAGILFATL). Residues 108 to 162 (SCLHIWIIMPFVKTCLMVLPSVQTIWRSVTDVIIAPLCTSIGRICSSVSLQVSHD) are Cytoplasmic-facing.

This sequence belongs to the caveolin family. In terms of assembly, monomer or homodimer. Interacts with CAV1; the interaction forms a stable heterooligomeric complex that is required for targeting to lipid rafts and for caveolae formation. Tyrosine phosphorylated forms do not form heterooligomers with the Tyr-19-phosphorylated form existing as a monomer or dimer, and the Tyr-27-form as a monomer only. Interacts (tyrosine phosphorylated form) with the SH2 domain-containing proteins, RASA1, NCK1 and SRC. Interacts (tyrosine phosphorylated form) with INSR, the interaction (Tyr-27-phosphorylated form) is increased on insulin stimulation. Interacts (Tyr-19 phosphorylated form) with MAPK1 (phosphorylated form); the interaction, promoted by insulin, leads to nuclear location and MAPK1 activation. Interacts with STAT3; the interaction is increased on insulin-induced tyrosine phosphorylation leading to STAT activation. Phosphorylated on serine and tyrosine residues. CAV1 promotes phosphorylation on Ser-23 which then targets the complex to the plasma membrane, lipid rafts and caveolae. Phosphorylation on Ser-36 appears to modulate mitosis in endothelial cells. Phosphorylation on both Tyr-19 and Tyr-27 is required for insulin-induced 'Ser-727' phosphorylation of STAT3 and its activation. Phosphorylation on Tyr-19 is required for insulin-induced phosphorylation of MAPK1 and DNA binding of STAT3. Tyrosine phosphorylation is induced by both EGF and insulin (By. similarity).

The protein resides in the nucleus. It is found in the cytoplasm. Its subcellular location is the golgi apparatus membrane. The protein localises to the cell membrane. It localises to the membrane. The protein resides in the caveola. Functionally, may act as a scaffolding protein within caveolar membranes. Interacts directly with G-protein alpha subunits and can functionally regulate their activity. Acts as an accessory protein in conjunction with CAV1 in targeting to lipid rafts and driving caveolae formation. The Ser-36 phosphorylated form has a role in modulating mitosis in endothelial cells. Positive regulator of cellular mitogenesis of the MAPK signaling pathway. Required for the insulin-stimulated nuclear translocation and activation of MAPK1 and STAT3, and the subsequent regulation of cell cycle progression. This is Caveolin-2 (CAV2) from Atelerix albiventris (Middle-African hedgehog).